The primary structure comprises 217 residues: ATP phosphoribosyltransferase (217 aa).

Belongs to the ATP phosphoribosyltransferase family. Short subfamily. As to quaternary structure, heteromultimer composed of HisG and HisZ subunits.

It localises to the cytoplasm. It carries out the reaction 1-(5-phospho-beta-D-ribosyl)-ATP + diphosphate = 5-phospho-alpha-D-ribose 1-diphosphate + ATP. The protein operates within amino-acid biosynthesis; L-histidine biosynthesis; L-histidine from 5-phospho-alpha-D-ribose 1-diphosphate: step 1/9. Catalyzes the condensation of ATP and 5-phosphoribose 1-diphosphate to form N'-(5'-phosphoribosyl)-ATP (PR-ATP). Has a crucial role in the pathway because the rate of histidine biosynthesis seems to be controlled primarily by regulation of HisG enzymatic activity. In Burkholderia ambifaria (strain MC40-6), this protein is ATP phosphoribosyltransferase.